The primary structure comprises 215 residues: Charged multivesicular body protein 4 (215 aa).

Positions 10–173 (KQDTQETIGK…QEELDAQLLN (164 aa)) form a coiled coil.

Belongs to the SNF7 family. As to quaternary structure, probable core component of the endosomal sorting required for transport complex III (ESCRT-III). ESCRT-III components are thought to multimerize to form a flat lattice on the perimeter membrane of the endosome.

It is found in the cytoplasmic vesicle membrane. Its subcellular location is the late endosome membrane. In terms of biological role, probable core component of the endosomal sorting required for transport complex III (ESCRT-III) which is involved in multivesicular bodies (MVBs) formation and sorting of endosomal cargo proteins into MVBs. MVBs contain intraluminal vesicles (ILVs) that are generated by invagination and scission from the limiting membrane of the endosome and mostly are delivered to lysosomes enabling degradation of membrane proteins. The protein is Charged multivesicular body protein 4 (chmp4) of Dictyostelium discoideum (Social amoeba).